Reading from the N-terminus, the 372-residue chain is Coxsackievirus and adenovirus receptor homolog (372 aa).

An N-terminal signal peptide occupies residues 1–22; it reads MDMRTSFLCVTYVILLTGSACG. Ig-like C2-type domains are found at residues 23–140 and 130–234; these read LQIT…YLLT and PGIA…VTIT. The Extracellular portion of the chain corresponds to 23–241; the sequence is LQITSTGQTS…TITQPPNTAG (219 aa). Intrachain disulfides connect C45/C124, C150/C227, and C166/C216. N205 carries an N-linked (GlcNAc...) asparagine glycan. A helical transmembrane segment spans residues 242 to 262; it reads IIAGVIICILLLLILLALILF. Over 263–372 the chain is Cytoplasmic; sequence CCCRARHKKK…PAQNKDGSIV (110 aa). Positions 286–352 are disordered; sequence PPPKSRVSTA…PPSRMAGPNL (67 aa). A compositionally biased stretch (polar residues) spans 291 to 317; sequence RVSTARSFTSVGSQRSSLGSMSPSNLH. Positions 318–336 are enriched in basic and acidic residues; the sequence is EYSKPQYDKIPSEEYDRPP.

In terms of assembly, monomer. Probably homodimer formed by 2 molecules on adjacent cells.

It localises to the cell membrane. The protein resides in the basolateral cell membrane. The protein localises to the cell junction. It is found in the tight junction. Its subcellular location is the adherens junction. In terms of biological role, may function as a homophilic cell adhesion molecule and be essential for tight junction integrity. May also be involved in transepithelial migration of leukocytes through adhesive interactions with jaml. The interaction between both receptors may also mediate the activation of gamma-delta T-cells, a subpopulation of T-cells residing in epithelia and involved in tissue homeostasis and repair. The chain is Coxsackievirus and adenovirus receptor homolog (cxadr) from Danio rerio (Zebrafish).